The following is a 430-amino-acid chain: Shufflon protein A' (430 aa).

A constant region region spans residues 1–361; that stretch reads MKKYDRGWAS…TGAILSCQSG (361 aa). The interval 362–430 is variable region; it reads TWGTIGGKLK…GCIASCVTLN (69 aa).

This chain is Shufflon protein A', found in Escherichia coli.